The following is an 882-amino-acid chain: DNA mismatch repair protein MutS (882 aa).

626 to 633 (GPNMAGKS) is an ATP binding site.

The protein belongs to the DNA mismatch repair MutS family.

Its function is as follows. This protein is involved in the repair of mismatches in DNA. It is possible that it carries out the mismatch recognition step. This protein has a weak ATPase activity. This Anaeromyxobacter sp. (strain Fw109-5) protein is DNA mismatch repair protein MutS.